Reading from the N-terminus, the 86-residue chain is BolA-like protein 2 (86 aa).

At Met1 the chain carries N-acetylmethionine.

Belongs to the BolA/IbaG family. As to quaternary structure, interacts with GLRX3; forms a heterotrimeric complex composed by two BOLA2 molecules and one GLRX3 molecule; linked by [2Fe-2S] clusters.

Its subcellular location is the cytoplasm. It is found in the nucleus. Acts as a cytosolic iron-sulfur (Fe-S) cluster assembly factor that facilitates [2Fe-2S] cluster insertion into a subset of cytosolic proteins. Acts together with the monothiol glutaredoxin GLRX3. The sequence is that of BolA-like protein 2 (BOLA2) from Homo sapiens (Human).